The primary structure comprises 397 residues: MIRYFTAGESHGPALSAIIEGMPAGVAVSREEIDLQLRRRQQGYGRGGRMKIEQDSAEVLSGIRFGKTIGSPIALVIRNRDWENWTDKMAQFESHEATTEKITIPRPGHADLAGRIKYGFNDIRPVIDRSSARETAARVAAGSLARTFLCQLGIEIGSRISSIGPVTDTGSDKTISALLEKGAECLAGAADRSEVRMLGKKAEEDAIAAIDLAKERGDTLGGIIEIYITGVPVGLGSYVQHDRRLDSQLAAAVMAIQAIKGVEIGPAFENARKPGSEVHDALHLVKGEGVERPTNRSGGIEGSMSSGETIHIRAAMKPISSMQSPLQSFDLATLQPVLSRFERSDTCAVPAAGVVAEAVVAPVIANALFEKFGGDHLEEIRNRLNHYREAVRSAFSG.

Positions 40 and 46 each coordinate NADP(+). Residues 129–131 (RSS), 257–258 (QA), Gly-302, 317–321 (KPISS), and Arg-343 each bind FMN.

This sequence belongs to the chorismate synthase family. As to quaternary structure, homotetramer. The cofactor is FMNH2.

It carries out the reaction 5-O-(1-carboxyvinyl)-3-phosphoshikimate = chorismate + phosphate. It participates in metabolic intermediate biosynthesis; chorismate biosynthesis; chorismate from D-erythrose 4-phosphate and phosphoenolpyruvate: step 7/7. Functionally, catalyzes the anti-1,4-elimination of the C-3 phosphate and the C-6 proR hydrogen from 5-enolpyruvylshikimate-3-phosphate (EPSP) to yield chorismate, which is the branch point compound that serves as the starting substrate for the three terminal pathways of aromatic amino acid biosynthesis. This reaction introduces a second double bond into the aromatic ring system. In Chlorobium phaeovibrioides (strain DSM 265 / 1930) (Prosthecochloris vibrioformis (strain DSM 265)), this protein is Chorismate synthase.